Consider the following 134-residue polypeptide: B3 domain-containing protein At1g16640 (134 aa).

The segment at residues 7-100 (VQFMKPFISE…TFYVIIYGHN (94 aa)) is a DNA-binding region (TF-B3).

It is found in the nucleus. The protein is B3 domain-containing protein At1g16640 of Arabidopsis thaliana (Mouse-ear cress).